The following is a 675-amino-acid chain: Polyamine deacetylase HDAC10 (675 aa).

Asp22 is a substrate binding site. A Substrate specificity motif is present at residues 23–26 (PACE). Asp94 contributes to the substrate binding site. His137 (proton donor/acceptor) is an active-site residue. Asp174, His176, and Asp267 together coordinate Zn(2+). Tyr307 lines the substrate pocket. Positions 362–399 (LAQSETNPKRPRLDATNGGPKESSEPASESNPKKTAQD) are disordered.

Belongs to the histone deacetylase family. HD type 2 subfamily.

It is found in the cytoplasm. Its subcellular location is the nucleus. The catalysed reaction is N(8)-acetylspermidine + H2O = spermidine + acetate. It catalyses the reaction N-acetylputrescine + H2O = putrescine + acetate. It carries out the reaction N-acetylcadaverine + H2O = cadaverine + acetate. Functionally, polyamine deacetylase (PDAC), which acts preferentially on N(8)-acetylspermidine, and also on acetylcadaverine and acetylputrescine. Exhibits attenuated catalytic activity toward N(1),N(8)-diacetylspermidine and very low activity, if any, toward N(1)-acetylspermidine. Has a very weak lysine deacetylase, if any. This Danio rerio (Zebrafish) protein is Polyamine deacetylase HDAC10 (hdac10).